An 82-amino-acid chain; its full sequence is UPF0337 protein PP_2059 (82 aa).

The protein belongs to the UPF0337 (CsbD) family.

This Pseudomonas putida (strain ATCC 47054 / DSM 6125 / CFBP 8728 / NCIMB 11950 / KT2440) protein is UPF0337 protein PP_2059.